The following is a 479-amino-acid chain: MGSTKPRPSGKNSISHAQSLPGKTFIIDNGAYNMKAGYAPDSQPLDDEEIALSACAAIPNAIVKTRANRTYVGAQIGTNVTDWNEMLFRRPVEKGYTVNWEAQKEIWENSFFDERTVRSKELHIADPEDVTIIFTEAPNALPALQKNADEIIMEEWGFGGYLRCVVGMAKPFALNTGPSLNAWNEIQSLFEDSVLSQPRAVASPAECLLVVDSGYSHTVITPVYRGRPLQRGIRRLDLGGKHLTNYLKELVSMRQYNMVDETYIMNEVKESVCFVSNDFNRDLERTWKGNRKRGQPDPTDGVVVDYVLPDPNGGKRGFMRPHDPLLGSKKRKAVLAGASAEQLNEDVLVLGNERFTVPEILFTPSDIGMKSAGIPDIILQSLSVLPTGLHPAFLANVLVVGGNSLLPGFMERLETELRQIASAECVVRVRRPKDPIRFAWLGGSRLATNKEELKKVAITRQEYQEHGSSWTTRKFSGAL.

This sequence belongs to the actin family. ARP6 subfamily. As to quaternary structure, component of the SWR1 chromatin remodeling complex.

The protein resides in the cytoplasm. The protein localises to the cytoskeleton. It is found in the nucleus. Component of the SWR1 complex which mediates the ATP-dependent exchange of histone H2A for the H2A variant HZT1 leading to transcriptional regulation of selected genes by chromatin remodeling. Involved in chromosome stability. In Emericella nidulans (strain FGSC A4 / ATCC 38163 / CBS 112.46 / NRRL 194 / M139) (Aspergillus nidulans), this protein is Actin-like protein arp6 (arp6).